We begin with the raw amino-acid sequence, 308 residues long: ATP synthase gamma chain (308 aa).

It belongs to the ATPase gamma chain family. In terms of assembly, F-type ATPases have 2 components, CF(1) - the catalytic core - and CF(0) - the membrane proton channel. CF(1) has five subunits: alpha(3), beta(3), gamma(1), delta(1), epsilon(1). CF(0) has three main subunits: a, b and c.

It localises to the cell inner membrane. Functionally, produces ATP from ADP in the presence of a proton gradient across the membrane. The gamma chain is believed to be important in regulating ATPase activity and the flow of protons through the CF(0) complex. The polypeptide is ATP synthase gamma chain (Salinibacter ruber (strain DSM 13855 / M31)).